The primary structure comprises 322 residues: Mas-related G-protein coupled receptor member B5 (322 aa).

Topologically, residues 1–34 are extracellular; that stretch reads MGLTTPAWNINNTVVNGSNNTEHFSCVSKFNTLN. N-linked (GlcNAc...) asparagine glycosylation is found at N11, N16, and N19. The helical transmembrane segment at 35–55 threads the bilayer; sequence FLTVIIAMFGLAGNAIVLWLL. The Cytoplasmic segment spans residues 56–70; the sequence is AFHLPRNAFSVYVCN. A helical membrane pass occupies residues 71-91; it reads LACADFLQLCTQILGSLECFL. The Extracellular portion of the chain corresponds to 92–98; it reads QLNRRHT. A helical membrane pass occupies residues 99-119; it reads FFLTVVFMFAYLAGLCMIAAI. At 120 to 147 the chain is on the cytoplasmic side; sequence SVERSLSVMWPIWYHCQRPRHTSSIMCA. Residues 148–168 form a helical membrane-spanning segment; sequence LLWAFCLLLNFLLGEGCGLLF. Topologically, residues 169 to 172 are extracellular; the sequence is SDPK. A helical membrane pass occupies residues 173–193; that stretch reads YYFCITCALITTALIILLTVV. Over 194–216 the chain is Cytoplasmic; that stretch reads PSVSSLALLVKMICGSHRIPVTR. A helical membrane pass occupies residues 217–237; it reads FYVTIALTLVVFIFLGLPFGI. Topologically, residues 238 to 260 are extracellular; that stretch reads YSSFLIMFKEFQSIFSYHVLEVT. Residues 261-281 form a helical membrane-spanning segment; that stretch reads IFLSCVNSCANPIIYFLVGSI. The Cytoplasmic portion of the chain corresponds to 282-322; the sequence is RQHRLQWQSLKLLLQRAMQDTPEEDSGERVPSQRSGELESV. The interval 302–322 is disordered; it reads TPEEDSGERVPSQRSGELESV.

This sequence belongs to the G-protein coupled receptor 1 family. Mas subfamily.

It is found in the membrane. Functionally, orphan receptor. Probably involved in the function of nociceptive neurons. May regulate nociceptor function and/or development, including the sensation or modulation of pain. The sequence is that of Mas-related G-protein coupled receptor member B5 (Mrgprb5) from Mus musculus (Mouse).